Consider the following 444-residue polypeptide: Tol-Pal system protein TolB (444 aa).

Positions 1-19 (MRNIIYFILSLLFSVTSYA) are cleaved as a signal peptide.

The protein belongs to the TolB family. As to quaternary structure, the Tol-Pal system is composed of five core proteins: the inner membrane proteins TolA, TolQ and TolR, the periplasmic protein TolB and the outer membrane protein Pal. They form a network linking the inner and outer membranes and the peptidoglycan layer.

Its subcellular location is the periplasm. Functionally, part of the Tol-Pal system, which plays a role in outer membrane invagination during cell division and is important for maintaining outer membrane integrity. This Rickettsia rickettsii (strain Sheila Smith) protein is Tol-Pal system protein TolB.